The sequence spans 251 residues: Small ribosomal subunit protein uS3 (251 aa).

The KH type-2 domain maps to 39 to 112; it reads IRKYINEVYA…NIILNVVEVR (74 aa). Residues 222-251 are disordered; that stretch reads EEKKPAKKFNKKPVAAKPANKEEKSSKEVK. The span at 240–251 shows a compositional bias: basic and acidic residues; sequence ANKEEKSSKEVK.

Belongs to the universal ribosomal protein uS3 family. As to quaternary structure, part of the 30S ribosomal subunit. Forms a tight complex with proteins S10 and S14.

In terms of biological role, binds the lower part of the 30S subunit head. Binds mRNA in the 70S ribosome, positioning it for translation. This is Small ribosomal subunit protein uS3 from Anaeroplasma abactoclasticum.